Here is a 339-residue protein sequence, read N- to C-terminus: UDP-N-acetylglucosamine--N-acetylmuramyl-(pentapeptide) pyrophosphoryl-undecaprenol N-acetylglucosamine transferase (339 aa).

Residues 10 to 12 (TGG), N124, R168, S188, I235, and Q280 contribute to the UDP-N-acetyl-alpha-D-glucosamine site.

It belongs to the glycosyltransferase 28 family. MurG subfamily.

It localises to the cell inner membrane. It catalyses the reaction di-trans,octa-cis-undecaprenyl diphospho-N-acetyl-alpha-D-muramoyl-L-alanyl-D-glutamyl-meso-2,6-diaminopimeloyl-D-alanyl-D-alanine + UDP-N-acetyl-alpha-D-glucosamine = di-trans,octa-cis-undecaprenyl diphospho-[N-acetyl-alpha-D-glucosaminyl-(1-&gt;4)]-N-acetyl-alpha-D-muramoyl-L-alanyl-D-glutamyl-meso-2,6-diaminopimeloyl-D-alanyl-D-alanine + UDP + H(+). It participates in cell wall biogenesis; peptidoglycan biosynthesis. Cell wall formation. Catalyzes the transfer of a GlcNAc subunit on undecaprenyl-pyrophosphoryl-MurNAc-pentapeptide (lipid intermediate I) to form undecaprenyl-pyrophosphoryl-MurNAc-(pentapeptide)GlcNAc (lipid intermediate II). This is UDP-N-acetylglucosamine--N-acetylmuramyl-(pentapeptide) pyrophosphoryl-undecaprenol N-acetylglucosamine transferase from Pseudothermotoga lettingae (strain ATCC BAA-301 / DSM 14385 / NBRC 107922 / TMO) (Thermotoga lettingae).